Here is a 209-residue protein sequence, read N- to C-terminus: Peptide methionine sulfoxide reductase MsrA (209 aa).

Cys-51 is an active-site residue.

Belongs to the MsrA Met sulfoxide reductase family.

It carries out the reaction L-methionyl-[protein] + [thioredoxin]-disulfide + H2O = L-methionyl-(S)-S-oxide-[protein] + [thioredoxin]-dithiol. The enzyme catalyses [thioredoxin]-disulfide + L-methionine + H2O = L-methionine (S)-S-oxide + [thioredoxin]-dithiol. Has an important function as a repair enzyme for proteins that have been inactivated by oxidation. Catalyzes the reversible oxidation-reduction of methionine sulfoxide in proteins to methionine. This chain is Peptide methionine sulfoxide reductase MsrA, found in Vibrio vulnificus (strain CMCP6).